Here is a 283-residue protein sequence, read N- to C-terminus: 4-hydroxy-tetrahydrodipicolinate synthase (283 aa).

T46 contributes to the pyruvate binding site. Y134 acts as the Proton donor/acceptor in catalysis. Catalysis depends on K162, which acts as the Schiff-base intermediate with substrate. Position 208 (I208) interacts with pyruvate.

The protein belongs to the DapA family. As to quaternary structure, homotetramer; dimer of dimers.

It is found in the cytoplasm. It catalyses the reaction L-aspartate 4-semialdehyde + pyruvate = (2S,4S)-4-hydroxy-2,3,4,5-tetrahydrodipicolinate + H2O + H(+). Its pathway is amino-acid biosynthesis; L-lysine biosynthesis via DAP pathway; (S)-tetrahydrodipicolinate from L-aspartate: step 3/4. Catalyzes the condensation of (S)-aspartate-beta-semialdehyde [(S)-ASA] and pyruvate to 4-hydroxy-tetrahydrodipicolinate (HTPA). This is 4-hydroxy-tetrahydrodipicolinate synthase from Methanothermobacter thermautotrophicus (strain ATCC 29096 / DSM 1053 / JCM 10044 / NBRC 100330 / Delta H) (Methanobacterium thermoautotrophicum).